A 154-amino-acid polypeptide reads, in one-letter code: 3-hydroxyacyl-[acyl-carrier-protein] dehydratase FabZ (154 aa).

The active site involves histidine 54.

The protein belongs to the thioester dehydratase family. FabZ subfamily.

It localises to the cytoplasm. It carries out the reaction a (3R)-hydroxyacyl-[ACP] = a (2E)-enoyl-[ACP] + H2O. Its function is as follows. Involved in unsaturated fatty acids biosynthesis. Catalyzes the dehydration of short chain beta-hydroxyacyl-ACPs and long chain saturated and unsaturated beta-hydroxyacyl-ACPs. This Chlamydia abortus (strain DSM 27085 / S26/3) (Chlamydophila abortus) protein is 3-hydroxyacyl-[acyl-carrier-protein] dehydratase FabZ.